The primary structure comprises 370 residues: Lysophosphatidic acid receptor 4 (370 aa).

Over 1 to 43 (MGDRRFIDFQFQDLNSSLRPRLGNATANNTCIVDDSFKYNLNG) the chain is Extracellular. Residues asparagine 15, asparagine 24, and asparagine 28 are each glycosylated (N-linked (GlcNAc...) asparagine). The helical transmembrane segment at 44 to 64 (AVYSVVFILGLITNSASLFVF) threads the bilayer. At 65–73 (CFRMKMRSE) the chain is on the cytoplasmic side. The helical transmembrane segment at 74–94 (TAIFITNLALSDLLFVCTLPF) threads the bilayer. Residues 95-112 (KIFYNFNRHWPFGDTLCK) lie on the Extracellular side of the membrane. Cysteine 111 and cysteine 188 are joined by a disulfide. A helical membrane pass occupies residues 113–133 (ISGTAFLTNIYGSMLFLTCIS). The Cytoplasmic portion of the chain corresponds to 134–155 (VDRFLAIVYPFRSRTIRTRRNS). The chain crosses the membrane as a helical span at residues 156-176 (AIVCAGVWILVLSGGISASLF). Residues 177–203 (STTNVNNATTTCFEGFSKRVWKTYLSK) are Extracellular-facing. Asparagine 183 is a glycosylation site (N-linked (GlcNAc...) asparagine). The helical transmembrane segment at 204–224 (ITIFIEVVGFIIPLILNVSCS) threads the bilayer. The Cytoplasmic portion of the chain corresponds to 225-254 (SVVLRTLRKPATLSQIGTNKKKVLKMITVH). Residues 255 to 275 (MAVFVVCFVPYNSVLFLYALV) traverse the membrane as a helical segment. The Extracellular segment spans residues 276–294 (RSQAITNCLLERFAKIMYP). A helical membrane pass occupies residues 295 to 315 (ITLCLATLNCCFDPFIYYFTL). Residues 316-370 (ESFQKSFYINTHIRMESLFKTETPLTPKPSLPAIQEEVSDQTTNNGGELMLESTF) are Cytoplasmic-facing.

Belongs to the G-protein coupled receptor 1 family.

It is found in the cell membrane. In terms of biological role, receptor for lysophosphatidic acid (LPA), a mediator of diverse cellular activities. Transduces a signal by increasing the intracellular calcium ions and by stimulating adenylyl cyclase activity. The rank order of potency for agonists of this receptor is 1-oleoyl- &gt; 1-stearoyl- &gt; 1-palmitoyl- &gt; 1-myristoyl- &gt; 1-alkyl- &gt; 1-alkenyl-LPA. The protein is Lysophosphatidic acid receptor 4 (Lpar4) of Mus musculus (Mouse).